The following is a 914-amino-acid chain: Calcium-activated chloride channel regulator 1 (914 aa).

Residues 1-21 (MGPFKSSVFILILHLLEGALS) form the signal peptide. Residues 46–199 (DETLIQQIKD…GITGTNVVKK (154 aa)) form a metalloprotease domain region. Histidine 156 is a binding site for Zn(2+). Glutamate 157 is an active-site residue. 2 residues coordinate Zn(2+): histidine 160 and aspartate 167. Positions 306 to 475 (IVCLVLDKSG…NGLIDAFGAL (170 aa)) constitute a VWFA domain. 8 N-linked (GlcNAc...) asparagine glycosylation sites follow: asparagine 503, asparagine 585, asparagine 770, asparagine 804, asparagine 810, asparagine 831, asparagine 836, and asparagine 890.

Belongs to the CLCR family. Glycosylated. Post-translationally, the 125-kDa product is autoproteolytically processed by the metalloprotease domain and yields to two cell-surface-associated subunits, a 90-kDa protein and a group of 37- to 41-kDa proteins. The cleavage is necessary for calcium-activated chloride channel (CaCC) activation activity. As to expression, highly expressed in small intestine and colon namely in intestinal basal crypt epithelia and goblet cells, and appendix. Weakly expressed in uterus, testis and kidney. Expressed in the airways epithelium of both asthmatic and healthy patients. Expressed in the bronchial epithelium, especially in mucus-producing goblet cells. Expressed in normal turbinate mucosa and nasal polyp. Expressed in.

The protein resides in the secreted. The protein localises to the extracellular space. Its subcellular location is the cell membrane. Its function is as follows. May be involved in mediating calcium-activated chloride conductance. May play critical roles in goblet cell metaplasia, mucus hypersecretion, cystic fibrosis and AHR. May be involved in the regulation of mucus production and/or secretion by goblet cells. Involved in the regulation of tissue inflammation in the innate immune response. May play a role as a tumor suppressor. Induces MUC5AC. This Homo sapiens (Human) protein is Calcium-activated chloride channel regulator 1 (CLCA1).